The primary structure comprises 316 residues: Acetyl-coenzyme A carboxylase carboxyl transferase subunit alpha (316 aa).

The CoA carboxyltransferase C-terminal domain occupies 39–293 (RLQDKSHALT…RQTLLAQLES (255 aa)).

This sequence belongs to the AccA family. In terms of assembly, acetyl-CoA carboxylase is a heterohexamer composed of biotin carboxyl carrier protein (AccB), biotin carboxylase (AccC) and two subunits each of ACCase subunit alpha (AccA) and ACCase subunit beta (AccD).

The protein localises to the cytoplasm. The catalysed reaction is N(6)-carboxybiotinyl-L-lysyl-[protein] + acetyl-CoA = N(6)-biotinyl-L-lysyl-[protein] + malonyl-CoA. It functions in the pathway lipid metabolism; malonyl-CoA biosynthesis; malonyl-CoA from acetyl-CoA: step 1/1. Component of the acetyl coenzyme A carboxylase (ACC) complex. First, biotin carboxylase catalyzes the carboxylation of biotin on its carrier protein (BCCP) and then the CO(2) group is transferred by the carboxyltransferase to acetyl-CoA to form malonyl-CoA. The sequence is that of Acetyl-coenzyme A carboxylase carboxyl transferase subunit alpha from Azotobacter vinelandii (strain DJ / ATCC BAA-1303).